Reading from the N-terminus, the 411-residue chain is NAD-dependent dihydropyrimidine dehydrogenase subunit PreA (411 aa).

Substrate is bound by residues Asn-76 and 134–136 (NFS). The Nucleophile role is filled by Cys-137. 201–202 (NT) is a substrate binding site. 4Fe-4S ferredoxin-type domains are found at residues 335–367 (VYPR…WSEK) and 369–398 (RTPH…LGEV). [4Fe-4S] cluster is bound by residues Cys-344, Cys-347, Cys-350, Cys-354, Cys-378, Cys-381, Cys-384, and Cys-388.

This sequence belongs to the dihydropyrimidine dehydrogenase family. In terms of assembly, heterotetramer of 2 PreA and 2 PreT subunits. It depends on [4Fe-4S] cluster as a cofactor.

The catalysed reaction is 5,6-dihydrouracil + NAD(+) = uracil + NADH + H(+). It catalyses the reaction 5,6-dihydrothymine + NAD(+) = thymine + NADH + H(+). In terms of biological role, involved in pyrimidine base degradation. Catalyzes physiologically the reduction of uracil to 5,6-dihydrouracil (DHU) by using NADH as a specific cosubstrate. It also catalyzes the reverse reaction and the reduction of thymine to 5,6-dihydrothymine (DHT). The polypeptide is NAD-dependent dihydropyrimidine dehydrogenase subunit PreA (preA) (Escherichia coli O157:H7).